Reading from the N-terminus, the 311-residue chain is Putative HTH-type transcriptional regulatory protein MTH_967 (311 aa).

The region spanning 134–192 (LREVREEYNLSLKDLADLAHVSRKTIYKYENGLARASAETAMILEEILNIRITLSIDIF) is the HTH cro/C1-type domain. The H-T-H motif DNA-binding region spans 145-164 (LKDLADLAHVSRKTIYKYEN).

The sequence is that of Putative HTH-type transcriptional regulatory protein MTH_967 from Methanothermobacter thermautotrophicus (strain ATCC 29096 / DSM 1053 / JCM 10044 / NBRC 100330 / Delta H) (Methanobacterium thermoautotrophicum).